The chain runs to 359 residues: DNA polymerase IV (359 aa).

Residues 4–184 (IVHVDMDAFY…LKVNRIPGVG (181 aa)) form the UmuC domain. Asp-8 and Asp-102 together coordinate Mg(2+). Glu-103 is an active-site residue.

The protein belongs to the DNA polymerase type-Y family. As to quaternary structure, monomer. Mg(2+) is required as a cofactor.

The protein resides in the cytoplasm. The catalysed reaction is DNA(n) + a 2'-deoxyribonucleoside 5'-triphosphate = DNA(n+1) + diphosphate. Its function is as follows. Poorly processive, error-prone DNA polymerase involved in untargeted mutagenesis. Copies undamaged DNA at stalled replication forks, which arise in vivo from mismatched or misaligned primer ends. These misaligned primers can be extended by PolIV. Exhibits no 3'-5' exonuclease (proofreading) activity. May be involved in translesional synthesis, in conjunction with the beta clamp from PolIII. This chain is DNA polymerase IV, found in Xanthomonas axonopodis pv. citri (strain 306).